Here is a 231-residue protein sequence, read N- to C-terminus: Sensory transduction protein BceR (231 aa).

A Response regulatory domain is found at 3–116; sequence KLLLIEDDES…VLIAKIQAMF (114 aa). At D52 the chain carries 4-aspartylphosphate. The segment at residues 127-225 is a DNA-binding region (ompR/PhoB-type); that stretch reads STIKTWCGAA…KVGQGYIAKE (99 aa).

In terms of processing, phosphorylated by BceS.

The protein resides in the cytoplasm. Its function is as follows. Member of the two-component regulatory system BceS/BceR involved in the regulation of bacitracin resistance. When activated by BceS, binds to the upstream region of the bceAB promoter and up-regulates the expression of these two genes. The sequence is that of Sensory transduction protein BceR (bceR) from Bacillus subtilis (strain 168).